The chain runs to 382 residues: Exostosin-1 homolog (382 aa).

A signal peptide spans 1–20; it reads MQNVMKFHLVIFMLFGSVRL. N268 carries N-linked (GlcNAc...) asparagine glycosylation.

It belongs to the glycosyltransferase 47 family. As to quaternary structure, interacts with rib-2.

It is found in the endoplasmic reticulum. Its subcellular location is the golgi apparatus. Its function is as follows. Required for the biosynthesis of heparan sulfate by positively regulating N-acetylglucosamine transferase II (GlcNAcT-II) and glucuronyl transferase II (GlcAT-II) activities of glycosyltransferase rib-2. Probably not directly involved in chondroitin sulfate biosynthesis but negatively regulates chondroitin sulfate levels. Maternally required for normal ventral epidermal enclosure and for embryo elongation during the early stages of embryonic development. In addition, involved in the elongation of the pharyngeal isthmus and in the organization of the actin cytoskeleton in the pharyngeal muscles during the later stages embryonic development. In adults, regulates egg-laying and the normal morphogenesis of the vulva. Also involved in the directed migration of hermaphrodite-specific neurons. The chain is Exostosin-1 homolog (rib-1) from Caenorhabditis elegans.